Reading from the N-terminus, the 943-residue chain is Isoleucine--tRNA ligase (943 aa).

Residues 59–69 carry the 'HIGH' region motif; that stretch reads PYANGQIHLGH. E577 is a binding site for L-isoleucyl-5'-AMP. Residues 618-622 carry the 'KMSKS' region motif; sequence KMSKS. K621 provides a ligand contact to ATP. Zn(2+) is bound by residues C906, C909, C926, and C929.

This sequence belongs to the class-I aminoacyl-tRNA synthetase family. IleS type 1 subfamily. As to quaternary structure, monomer. Zn(2+) serves as cofactor.

It is found in the cytoplasm. The enzyme catalyses tRNA(Ile) + L-isoleucine + ATP = L-isoleucyl-tRNA(Ile) + AMP + diphosphate. In terms of biological role, catalyzes the attachment of isoleucine to tRNA(Ile). As IleRS can inadvertently accommodate and process structurally similar amino acids such as valine, to avoid such errors it has two additional distinct tRNA(Ile)-dependent editing activities. One activity is designated as 'pretransfer' editing and involves the hydrolysis of activated Val-AMP. The other activity is designated 'posttransfer' editing and involves deacylation of mischarged Val-tRNA(Ile). This Xylella fastidiosa (strain 9a5c) protein is Isoleucine--tRNA ligase.